A 1160-amino-acid polypeptide reads, in one-letter code: ATP-dependent helicase/deoxyribonuclease subunit B (1160 aa).

It belongs to the helicase family. AddB/RexB type 2 subfamily. As to quaternary structure, heterodimer of AddA and RexB. The cofactor is Mg(2+).

Functionally, the heterodimer acts as both an ATP-dependent DNA helicase and an ATP-dependent, dual-direction single-stranded exonuclease. Recognizes the chi site generating a DNA molecule suitable for the initiation of homologous recombination. This subunit has 5' -&gt; 3' nuclease activity but not helicase activity. In Lactobacillus helveticus (strain DPC 4571), this protein is ATP-dependent helicase/deoxyribonuclease subunit B.